Here is a 185-residue protein sequence, read N- to C-terminus: Probable calcium-binding protein CML10 (185 aa).

The tract at residues methionine 1–methionine 41 is disordered. 4 consecutive EF-hand domains span residues threonine 36–alanine 71, alanine 72–aspartate 107, alanine 110–lysine 145, and alanine 146–phenylalanine 181. 18 residues coordinate Ca(2+): aspartate 49, asparagine 51, aspartate 53, arginine 55, glutamate 60, aspartate 85, aspartate 87, aspartate 89, glutamate 96, aspartate 123, aspartate 125, asparagine 127, threonine 129, glutamate 134, aspartate 159, asparagine 161, aspartate 163, and glutamate 170.

Potential calcium sensor. This Oryza sativa subsp. japonica (Rice) protein is Probable calcium-binding protein CML10 (CML10).